The sequence spans 365 residues: Probable G-protein coupled receptor 142 (365 aa).

Residues 1-66 are Extracellular-facing; sequence MHLNSNPNSY…WPESPERSPC (66 aa). Residue N44 is glycosylated (N-linked (GlcNAc...) asparagine). A helical membrane pass occupies residues 67–87; that stretch reads VAGIIPVIYYSVLLSLGLPVA. The Cytoplasmic portion of the chain corresponds to 88–102; that stretch reads LARLAARTRKPSYHY. The helical transmembrane segment at 103-123 threads the bilayer; it reads LLALTASDIVTQVIIVFVGFL. At 124–140 the chain is on the extracellular side; that stretch reads LQGAVLARQVPQAVVRT. A helical membrane pass occupies residues 141–161; that stretch reads ANILEFAANHASVWIAVLFTV. At 162–185 the chain is on the cytoplasmic side; sequence DRYNALCRPLRHRATSSPGRTHRA. The chain crosses the membrane as a helical span at residues 186-206; sequence IAAVIGVTLLTGIPFYWWLDV. Residues 207–224 are Extracellular-facing; that stretch reads WRDADPPSTMDKLLKWAH. Residues 225 to 245 form a helical membrane-spanning segment; the sequence is CLIVYFIPCNVFLVTNSAIIL. At 246 to 264 the chain is on the cytoplasmic side; sequence RLRKRGQRGLRPLVSKSTA. The helical transmembrane segment at 265–285 threads the bilayer; the sequence is ILLGVTSLFALLWAPRIIVML. The Extracellular portion of the chain corresponds to 286–304; that stretch reads YHLYVAPVHRDWRVHLALD. A helical transmembrane segment spans residues 305 to 325; the sequence is IANMLAMLNTEVNFGLYCFIS. The Cytoplasmic portion of the chain corresponds to 326–365; the sequence is KTFRATVRQVICDVHMACALKSQPKQTVVELMLKSVGTEL.

The protein belongs to the G-protein coupled receptor 1 family.

It localises to the cell membrane. In terms of biological role, orphan receptor. The chain is Probable G-protein coupled receptor 142 (Gpr142) from Mus musculus (Mouse).